The chain runs to 920 residues: Isoleucine--tRNA ligase (920 aa).

The 'HIGH' region signature appears at 58–68 (PYANGHLHLGH). An L-isoleucyl-5'-AMP-binding site is contributed by glutamate 569. The 'KMSKS' region signature appears at 610–614 (KMSKS). Lysine 613 lines the ATP pocket. Cysteine 895, cysteine 898, cysteine 910, and cysteine 913 together coordinate Zn(2+).

It belongs to the class-I aminoacyl-tRNA synthetase family. IleS type 1 subfamily. As to quaternary structure, monomer. Requires Zn(2+) as cofactor.

It is found in the cytoplasm. The catalysed reaction is tRNA(Ile) + L-isoleucine + ATP = L-isoleucyl-tRNA(Ile) + AMP + diphosphate. Functionally, catalyzes the attachment of isoleucine to tRNA(Ile). As IleRS can inadvertently accommodate and process structurally similar amino acids such as valine, to avoid such errors it has two additional distinct tRNA(Ile)-dependent editing activities. One activity is designated as 'pretransfer' editing and involves the hydrolysis of activated Val-AMP. The other activity is designated 'posttransfer' editing and involves deacylation of mischarged Val-tRNA(Ile). The polypeptide is Isoleucine--tRNA ligase (Helicobacter pylori (strain Shi470)).